The chain runs to 377 residues: P2Y purinoceptor 2 (377 aa).

At M1–K32 the chain is on the extracellular side. N-linked (GlcNAc...) asparagine glycosylation is found at N9 and N13. Residues Y33 to L59 traverse the membrane as a helical segment. Residues C60–T70 lie on the Cytoplasmic side of the membrane. A helical transmembrane segment spans residues Y71 to Y93. Residues A94–R110 lie on the Extracellular side of the membrane. The cysteines at positions 106 and 183 are disulfide-linked. Residues F111–V129 traverse the membrane as a helical segment. The Cytoplasmic portion of the chain corresponds to H130–R152. The chain crosses the membrane as a helical span at residues V153 to V172. At T173–R194 the chain is on the extracellular side. The chain crosses the membrane as a helical span at residues F195–L220. The Cytoplasmic portion of the chain corresponds to M221–T246. A helical membrane pass occupies residues I247 to Y269. Topologically, residues S270 to A287 are extracellular. Residues Y288–A309 traverse the membrane as a helical segment. The Cytoplasmic portion of the chain corresponds to G310 to L377. Residues R318–L377 form a disordered region. Over residues R339–E363 the composition is skewed to basic and acidic residues.

The protein belongs to the G-protein coupled receptor 1 family. Spleen, testis, kidney, liver, lung, heart and brain.

It is found in the cell membrane. Functionally, receptor for ATP and UTP coupled to G-proteins that activate a phosphatidylinositol-calcium second messenger system. The affinity range is UTP = ATP &gt; ATP-gamma-S &gt;&gt; 2-methylthio-ATP = ADP. In Homo sapiens (Human), this protein is P2Y purinoceptor 2 (P2RY2).